We begin with the raw amino-acid sequence, 160 residues long: 6,7-dimethyl-8-ribityllumazine synthase (160 aa).

5-amino-6-(D-ribitylamino)uracil-binding positions include phenylalanine 23, serine 61–glutamate 63, and alanine 85–isoleucine 87. Aspartate 90–threonine 91 contacts (2S)-2-hydroxy-3-oxobutyl phosphate. The Proton donor role is filled by histidine 93. Phenylalanine 118 lines the 5-amino-6-(D-ribitylamino)uracil pocket. Arginine 132 contributes to the (2S)-2-hydroxy-3-oxobutyl phosphate binding site.

This sequence belongs to the DMRL synthase family.

It catalyses the reaction (2S)-2-hydroxy-3-oxobutyl phosphate + 5-amino-6-(D-ribitylamino)uracil = 6,7-dimethyl-8-(1-D-ribityl)lumazine + phosphate + 2 H2O + H(+). It participates in cofactor biosynthesis; riboflavin biosynthesis; riboflavin from 2-hydroxy-3-oxobutyl phosphate and 5-amino-6-(D-ribitylamino)uracil: step 1/2. Catalyzes the formation of 6,7-dimethyl-8-ribityllumazine by condensation of 5-amino-6-(D-ribitylamino)uracil with 3,4-dihydroxy-2-butanone 4-phosphate. This is the penultimate step in the biosynthesis of riboflavin. This Parasynechococcus marenigrum (strain WH8102) protein is 6,7-dimethyl-8-ribityllumazine synthase.